We begin with the raw amino-acid sequence, 1402 residues long: MRQDVANMFNQNAPAPSFEAIRISIASPEKIRSWSSGEIKKPETINYRTFKPERDGLFCARIFGPTKDYECLCGKYKRIKYRGIVCEKCGVEVTLARVRRERMGHIDLAAPVAHIWFLKSLPSRISTLVDMPLKDVERVLYFESYVVIEPGLTELEPLQLLTEEEYMDAQDRLGEDAFTALIGAEAIREILKSLDLPTLAETLREELRESSSELKTKKYSKRLKVVDSFIQSKAKPEWMILTVVPVIPPDLRPLVPLDGGRFATSDLNDLYRRVINRNNRLKRLMELRAPDIIIRNEKRMLQESVDALFDNGRRGRTITGTNKRPLKSISDMLKGKQGRFRQNLLGKRVDYSGRSVIVVGPNLKLHECGLPKKMALELFKPFIYARLDAKGLAGTVKAAKKLVEKEKPEVWDILDEVIREHPVLLNRAPTLHRLGIQAFEPKLIEGKAIQLHPLVCAAFNADFDGDQMAVHVPLSLEAQLECRVLMMSTNNILSPANGKPIIVPSQDIILGLYYLSLDRKGEIGEGMVFADLAEIEHALDAGLVSLHSKVRALYDGVDSDGKPERRIIDTTPGRYMVANILPRSKAIGPELVNTVLSKKAIGKIIDEVYRLCGQKATVIFCDKMMELGFREACKAGISFGKDDMVIPEAKKRLVDATKDLVSDYERQYADGLITRGEKYNKVVDAWSSCTDKVADAMMESAAKMQVSRGKEQVNSIFMMADSGARGSKNQMKQLAGMRGLMAKPSGEIIETPIISNFKEGLTVLEYFNSTHGARKGLADTALKTANSGYLTRRLVDVAQDCIINEDDCGTEKGIDINAVMEGADVVVSLNERILGRVIAEDIKGPDGKLVVPANTYVDEDVAALIDTATVDRVKVRSPLTCETKNGICAQCYGRDLARGTLVNRGEAVGVIAAQSIGEPGTQLTMRTFHIGGAAQVADQSSLEASFEGTVRFTDAEIVTRKDKTIVVVGRRMQVEIVDADGRTRQSFRPAYGTRLMAKDGDKVMPGKLLADWDPFAQPIVSEVAGEARFIDLSEGTTVREETDEATGISARVVVDPRSTSKTADLKPSIQIVDASGKPVKLPNGSPATYVLSVGAILSVSDGDRIEPGDTLSRVATGGAKTKDITGGLPRVAELFEARRPKDHAIIAEVDGRVEYGRDYKNKRKVTIVPTEEGREPIDYLVPKGKHLAVQDGDFIKRGEYLMDGNPAPQDILSTLGVEALANYLTDEVQKVYRLQGVPINDKHIEVIVRQMLQKVEITDGGDTVFITGEHIDAIEFDEANEAIRKSRKKDQREATANPLLLGITKASLQTRSFISAASFQETTRVLTEAAIQGKIDTLDGLKENVIVGRLIPAGTGGGIRQFRRVAAERDLKLKAKRAAAMAKAEEGINLVSLPAPERDTAE.

Residues Cys-71, Cys-73, Cys-86, and Cys-89 each coordinate Zn(2+). Mg(2+) contacts are provided by Asp-462, Asp-464, and Asp-466. Residues Cys-808, Cys-881, Cys-888, and Cys-891 each contribute to the Zn(2+) site.

The protein belongs to the RNA polymerase beta' chain family. As to quaternary structure, the RNAP catalytic core consists of 2 alpha, 1 beta, 1 beta' and 1 omega subunit. When a sigma factor is associated with the core the holoenzyme is formed, which can initiate transcription. Mg(2+) is required as a cofactor. Requires Zn(2+) as cofactor.

The catalysed reaction is RNA(n) + a ribonucleoside 5'-triphosphate = RNA(n+1) + diphosphate. Its function is as follows. DNA-dependent RNA polymerase catalyzes the transcription of DNA into RNA using the four ribonucleoside triphosphates as substrates. The sequence is that of DNA-directed RNA polymerase subunit beta' from Hyphomonas neptunium (strain ATCC 15444).